Reading from the N-terminus, the 185-residue chain is Protein GrpE (185 aa).

The tract at residues 1–22 is disordered; sequence MTASQEPVDQAPESNEPAPAVP.

This sequence belongs to the GrpE family. Homodimer.

Its subcellular location is the cytoplasm. Functionally, participates actively in the response to hyperosmotic and heat shock by preventing the aggregation of stress-denatured proteins, in association with DnaK and GrpE. It is the nucleotide exchange factor for DnaK and may function as a thermosensor. Unfolded proteins bind initially to DnaJ; upon interaction with the DnaJ-bound protein, DnaK hydrolyzes its bound ATP, resulting in the formation of a stable complex. GrpE releases ADP from DnaK; ATP binding to DnaK triggers the release of the substrate protein, thus completing the reaction cycle. Several rounds of ATP-dependent interactions between DnaJ, DnaK and GrpE are required for fully efficient folding. The sequence is that of Protein GrpE from Bordetella petrii (strain ATCC BAA-461 / DSM 12804 / CCUG 43448).